Consider the following 670-residue polypeptide: Acetyl-coenzyme A synthetase (670 aa).

Residues Arg211–Lys214 and Thr329 each bind CoA. Residues Gly404–Pro406, Asp428–Thr433, Asp519, and Arg534 contribute to the ATP site. Ser542 provides a ligand contact to CoA. Arg545 contacts ATP. Residue Arg603 participates in CoA binding.

The protein belongs to the ATP-dependent AMP-binding enzyme family.

The enzyme catalyses acetate + ATP + CoA = acetyl-CoA + AMP + diphosphate. This is Acetyl-coenzyme A synthetase (facA) from Emericella nidulans (strain FGSC A4 / ATCC 38163 / CBS 112.46 / NRRL 194 / M139) (Aspergillus nidulans).